The primary structure comprises 90 residues: DNA-binding protein HU-alpha (90 aa).

This sequence belongs to the bacterial histone-like protein family. In terms of assembly, heterodimer of an alpha and a beta chain.

Functionally, histone-like DNA-binding protein which is capable of wrapping DNA to stabilize it, and thus to prevent its denaturation under extreme environmental conditions. In Escherichia coli O157:H7, this protein is DNA-binding protein HU-alpha (hupA).